The chain runs to 661 residues: Transmembrane and coiled-coil domain-containing protein STS1 (661 aa).

2 disordered regions span residues 34-71 (AHHH…GADA) and 154-185 (VGNT…DDQL). Low complexity predominate over residues 59 to 69 (SSSSSNSGAGA). Over residues 175–184 (SPGESSHDDQ) the composition is skewed to basic and acidic residues. Helical transmembrane passes span 306 to 326 (ALLA…FGAL), 333 to 353 (LVPV…GSVA), 355 to 375 (SVAV…SKMA), and 466 to 486 (LSGL…TDFI).

Belongs to the TMCO4 family. As to quaternary structure, interacts with PKS10/PKS2 and 4CLL9/ACOS12.

The protein localises to the endoplasmic reticulum membrane. Functionally, involved in anther lipids biosynthesis and is required for tapetum degradation and pollen wall formation. Required for the formation of Ubisch bodies and microspores. Possesses lipase activity in vitro toward two synthetic substrates, p-nitrophenyl acetate (pNPA) and p-nitrophenyl butyrate (pNPB). The polypeptide is Transmembrane and coiled-coil domain-containing protein STS1 (Oryza sativa subsp. japonica (Rice)).